Reading from the N-terminus, the 114-residue chain is Gamma-glutamylcyclotransferase family protein ytfP (114 aa).

The protein belongs to the gamma-glutamylcyclotransferase family.

Its subcellular location is the cytoplasm. Functionally, may play a role in antibiotic biosynthesis. The sequence is that of Gamma-glutamylcyclotransferase family protein ytfP (ytfP) from Citrobacter rodentium (strain ICC168) (Citrobacter freundii biotype 4280).